The following is a 294-amino-acid chain: Elongation factor Ts (294 aa).

Residues 80–83 (TDFV) form an involved in Mg(2+) ion dislocation from EF-Tu region.

This sequence belongs to the EF-Ts family.

It localises to the cytoplasm. In terms of biological role, associates with the EF-Tu.GDP complex and induces the exchange of GDP to GTP. It remains bound to the aminoacyl-tRNA.EF-Tu.GTP complex up to the GTP hydrolysis stage on the ribosome. The sequence is that of Elongation factor Ts from Polynucleobacter necessarius subsp. necessarius (strain STIR1).